The following is a 332-amino-acid chain: DNA-directed RNA polymerase subunit alpha (332 aa).

The segment at 1–234 is alpha N-terminal domain (alpha-NTD); sequence MIEYVIPKKL…NHLQIITDSL (234 aa). The interval 264 to 332 is alpha C-terminal domain (alpha-CTD); sequence AVYSKKIDEL…KFGLSLKKGG (69 aa).

It belongs to the RNA polymerase alpha chain family. As to quaternary structure, homodimer. The RNAP catalytic core consists of 2 alpha, 1 beta, 1 beta' and 1 omega subunit. When a sigma factor is associated with the core the holoenzyme is formed, which can initiate transcription.

The catalysed reaction is RNA(n) + a ribonucleoside 5'-triphosphate = RNA(n+1) + diphosphate. Functionally, DNA-dependent RNA polymerase catalyzes the transcription of DNA into RNA using the four ribonucleoside triphosphates as substrates. In Pseudothermotoga lettingae (strain ATCC BAA-301 / DSM 14385 / NBRC 107922 / TMO) (Thermotoga lettingae), this protein is DNA-directed RNA polymerase subunit alpha.